Reading from the N-terminus, the 371-residue chain is Protein IQ-DOMAIN 7 (371 aa).

Residues 1-32 (MGGSGNWIRSLISNRKPVNDQQEKLSDKSSKK) form a disordered region. The span at 17 to 29 (PVNDQQEKLSDKS) shows a compositional bias: basic and acidic residues. 2 consecutive IQ domains span residues 93–121 (REWASTRIQAAFRAFLARQAFRALKAVVR) and 122–144 (IQAIFRGRQVRKQAAVTLRCMQA). Residues 125–141 (IFRGRQVRKQAAVTLRC) form a calmodulin-binding region. Disordered regions lie at residues 285–308 (SGMSYDSLHDETSTSSTSQSPVAF) and 327–371 (LTQS…SQRS). Composition is skewed to polar residues over residues 297 to 308 (STSSTSQSPVAF) and 327 to 341 (LTQSTQAKQRQSGLS).

This sequence belongs to the IQD family. In terms of assembly, binds to multiple calmodulin (CaM) in the presence of Ca(2+) and CaM-like proteins.

It is found in the nucleus. Its subcellular location is the nucleus envelope. It localises to the cytoplasm. The protein localises to the cytoskeleton. Its function is as follows. May be involved in cooperative interactions with calmodulins or calmodulin-like proteins. Recruits calmodulin proteins to microtubules, thus being a potential scaffold in cellular signaling and trafficking. May associate with nucleic acids and regulate gene expression at the transcriptional or post-transcriptional level. In Arabidopsis thaliana (Mouse-ear cress), this protein is Protein IQ-DOMAIN 7.